The primary structure comprises 426 residues: Dynein regulatory complex protein 10 (426 aa).

2 disordered regions span residues 18–37 (TRIG…LKPL) and 399–426 (SKKK…KGKK). Residues 377-406 (MVRAATLIQAFWKGYLVRSLLRSKKKRGKG) enclose the IQ domain. Residues 399–408 (SKKKRGKGKA) show a composition bias toward basic residues. The segment covering 409-426 (KGKEKGKQKGKEKGKGKK) has biased composition (basic and acidic residues).

This sequence belongs to the DRC10 family. As to quaternary structure, component of the nexin-dynein regulatory complex (N-DRC). Interacts with CFAP52.

The protein localises to the cytoplasm. It is found in the cytoskeleton. It localises to the flagellum axoneme. In terms of biological role, component of the nexin-dynein regulatory complex (N-DRC), a key regulator of ciliary/flagellar motility which maintains the alignment and integrity of the distal axoneme and regulates microtubule sliding in motile axonemes. This Macaca fascicularis (Crab-eating macaque) protein is Dynein regulatory complex protein 10 (IQCD).